The following is a 489-amino-acid chain: MSVYGLQRLYIGGGYVDATSGKTFDTFDPATGDLLAQVQQASAADVDRAIASAQEGQREWAAMTAMQRSRILRRAVELLRERNDELAALETRDTGKPIAETLAVDIVTGADVIEYYAGLATAIEGLQVPLRADSFVYTRREPLGVCAGIGAWNYPIQIACWKTAPALAAGNAMVFKPSEVTPLSALKLAEIYTEAGVPAGVFNVVQGDGSVGALLTGHPDIAKVSFTGGVETGKKVMSLAGASSLKEVTMELGGKSPLIVFDDADLDRAADIAVTANFFSSGQVCTNGTRVFVHRSIKDAFTQKVLERVKRIRVGKPTDADTNFGPLVSAAQLDKVLGFIESGKAEGAKLLAGGTRLTEGHFANGQYVAPTVFGDCRDDMKIVREEIFGPVMSILEFESEDEVIARANDTHYGLAAGVVTENLSRAHRTIHRLEAGICWINTWGESPAEMPVGGYKQSGVGRENGITTLEHYTRIKSVQVELGRYNPVF.

The K(+) site is built by Thr-26 and Asp-93. Residue 150-152 participates in NAD(+) binding; the sequence is GAW. Lys-162 functions as the Charge relay system in the catalytic mechanism. NAD(+) is bound at residue 176-179; sequence KPSE. Val-180 is a binding site for K(+). Position 229 to 232 (229 to 232) interacts with NAD(+); the sequence is GVET. Leu-245 lines the K(+) pocket. Glu-251 serves as the catalytic Proton acceptor. Gly-253, Cys-285, and Glu-386 together coordinate NAD(+). The Nucleophile role is filled by Cys-285. Position 285 is a cysteine sulfenic acid (-SOH) (Cys-285). Positions 456 and 459 each coordinate K(+). Glu-463 functions as the Charge relay system in the catalytic mechanism.

Belongs to the aldehyde dehydrogenase family. In terms of assembly, dimer of dimers. Requires K(+) as cofactor.

The enzyme catalyses betaine aldehyde + NAD(+) + H2O = glycine betaine + NADH + 2 H(+). The protein operates within amine and polyamine biosynthesis; betaine biosynthesis via choline pathway; betaine from betaine aldehyde: step 1/1. Its function is as follows. Involved in the biosynthesis of the osmoprotectant glycine betaine. Catalyzes the irreversible oxidation of betaine aldehyde to the corresponding acid. The sequence is that of Betaine aldehyde dehydrogenase from Burkholderia multivorans (strain ATCC 17616 / 249).